The sequence spans 158 residues: NAD(P)H-quinone oxidoreductase subunit J, chloroplastic (158 aa).

This sequence belongs to the complex I 30 kDa subunit family. As to quaternary structure, NDH is composed of at least 16 different subunits, 5 of which are encoded in the nucleus.

It is found in the plastid. It localises to the chloroplast thylakoid membrane. It carries out the reaction a plastoquinone + NADH + (n+1) H(+)(in) = a plastoquinol + NAD(+) + n H(+)(out). The catalysed reaction is a plastoquinone + NADPH + (n+1) H(+)(in) = a plastoquinol + NADP(+) + n H(+)(out). Functionally, NDH shuttles electrons from NAD(P)H:plastoquinone, via FMN and iron-sulfur (Fe-S) centers, to quinones in the photosynthetic chain and possibly in a chloroplast respiratory chain. The immediate electron acceptor for the enzyme in this species is believed to be plastoquinone. Couples the redox reaction to proton translocation, and thus conserves the redox energy in a proton gradient. The protein is NAD(P)H-quinone oxidoreductase subunit J, chloroplastic of Draba nemorosa (Woodland whitlowgrass).